Here is a 239-residue protein sequence, read N- to C-terminus: Ribonuclease PH (239 aa).

Residues Arg86 and Gly124 to Arg126 each bind phosphate.

Belongs to the RNase PH family. In terms of assembly, homohexameric ring arranged as a trimer of dimers.

It carries out the reaction tRNA(n+1) + phosphate = tRNA(n) + a ribonucleoside 5'-diphosphate. Functionally, phosphorolytic 3'-5' exoribonuclease that plays an important role in tRNA 3'-end maturation. Removes nucleotide residues following the 3'-CCA terminus of tRNAs; can also add nucleotides to the ends of RNA molecules by using nucleoside diphosphates as substrates, but this may not be physiologically important. Probably plays a role in initiation of 16S rRNA degradation (leading to ribosome degradation) during starvation. This Anaeromyxobacter dehalogenans (strain 2CP-1 / ATCC BAA-258) protein is Ribonuclease PH.